The sequence spans 83 residues: MASLKLWVCLVLLLVLELTSVHECRPLVAEERFSGSSRLKKIRRELFERLKEMKGRSEGEETILGNTLDSKRLSPGGPDPRHH.

An N-terminal signal peptide occupies residues 1–24 (MASLKLWVCLVLLLVLELTSVHEC). The stretch at 38 to 58 (RLKKIRRELFERLKEMKGRSE) forms a coiled coil. The segment at 53-83 (MKGRSEGEETILGNTLDSKRLSPGGPDPRHH) is disordered. Residues Pro-75 and Pro-78 each carry the hydroxyproline modification. O-linked (Ara...) hydroxyproline glycosylation occurs at Pro-78.

The protein belongs to the CLV3/ESR signal peptide family. The O-glycosylation (arabinosylation) of the hydroxyproline Pro-78 enhances binding affinity of the CLE3p peptide for its receptor. In terms of tissue distribution, mostly expressed in roots, stems and apex, and, to a lower extent, in seedlings, leaves, flowers, siliques and pollen.

The protein localises to the secreted. It localises to the extracellular space. Its function is as follows. Extracellular signal peptide that regulates cell fate. This chain is CLAVATA3/ESR (CLE)-related protein 3, found in Arabidopsis thaliana (Mouse-ear cress).